The following is a 387-amino-acid chain: Erythronate-4-phosphate dehydrogenase (387 aa).

Positions 45 and 67 each coordinate substrate. Asp147 contacts NAD(+). Residue Arg208 is part of the active site. An NAD(+)-binding site is contributed by Asp232. Glu237 is a catalytic residue. His254 acts as the Proton donor in catalysis. Gly257 contributes to the NAD(+) binding site. Position 258 (Tyr258) interacts with substrate.

Belongs to the D-isomer specific 2-hydroxyacid dehydrogenase family. PdxB subfamily. As to quaternary structure, homodimer.

The protein localises to the cytoplasm. It carries out the reaction 4-phospho-D-erythronate + NAD(+) = (R)-3-hydroxy-2-oxo-4-phosphooxybutanoate + NADH + H(+). Its pathway is cofactor biosynthesis; pyridoxine 5'-phosphate biosynthesis; pyridoxine 5'-phosphate from D-erythrose 4-phosphate: step 2/5. In terms of biological role, catalyzes the oxidation of erythronate-4-phosphate to 3-hydroxy-2-oxo-4-phosphonooxybutanoate. The protein is Erythronate-4-phosphate dehydrogenase of Shewanella violacea (strain JCM 10179 / CIP 106290 / LMG 19151 / DSS12).